Reading from the N-terminus, the 120-residue chain is Large ribosomal subunit protein bL19c (120 aa).

It belongs to the bacterial ribosomal protein bL19 family.

The protein localises to the plastid. The protein resides in the chloroplast. The sequence is that of Large ribosomal subunit protein bL19c from Thalassiosira weissflogii (Marine diatom).